Reading from the N-terminus, the 424-residue chain is Histidine--tRNA ligase (424 aa).

The protein belongs to the class-II aminoacyl-tRNA synthetase family. In terms of assembly, homodimer.

It localises to the cytoplasm. It carries out the reaction tRNA(His) + L-histidine + ATP = L-histidyl-tRNA(His) + AMP + diphosphate + H(+). In Shewanella halifaxensis (strain HAW-EB4), this protein is Histidine--tRNA ligase.